A 123-amino-acid polypeptide reads, in one-letter code: WAP four-disulfide core domain protein 5 (123 aa).

Residues 1–24 form the signal peptide; the sequence is MRFGRLLLLAVLLAGVSQLPAVSG. WAP domains lie at 27-74 and 75-121; these read KGEK…IPRV and SVKL…RDPV. 8 disulfides stabilise this stretch: C34/C62, C41/C66, C49/C61, C55/C70, C81/C109, C88/C113, C96/C108, and C102/C117.

The protein localises to the secreted. In terms of biological role, putative acid-stable proteinase inhibitor. The sequence is that of WAP four-disulfide core domain protein 5 (WFDC5) from Otolemur garnettii (Small-eared galago).